The chain runs to 152 residues: ASP external chaperone (152 aa).

An N-terminal signal peptide occupies residues 1–22 (MNKPVTLLLATLLAPLSGQLCA).

Forms a complex with the serine protease ASP in the periplasm. After translocation of the ASP-ORF2 complex from the periplasm to the extracellular space, the complex is dissociated in a pH-dependent manner.

It is found in the periplasm. The protein resides in the secreted. With respect to regulation, degraded by ASP after secretion and dissociation of the ASP-ORF2 complex. Required for the production of the active form of the Aeromonas extracellular serine protease (ASP). Acts as a chaperone that helps ASP form an active structure in the periplasm. Formation of a complex with ASP in the periplasm also inactivates the protease activity and likely protects ASP from intrinsic proteases. Dissociation of the ASP-ORF2 complex after secretion in the extracellular space generates an active ASP. The protein is ASP external chaperone of Aeromonas sobria.